The following is a 305-amino-acid chain: Delta-9 acyl-lipid desaturase 1 (305 aa).

Residues 1 to 20 (MSLSASEKEENNKKMAADKA) form a disordered region. The next 2 membrane-spanning stretches (helical) occupy residues 39–59 (IVKA…PFNF) and 60–80 (TWPA…GITV). Residues His-83, His-88, His-120, His-123, and His-124 each coordinate Fe cation. Residues 83–88 (HRNLAH) carry the Histidine box-1 motif. The Histidine box-2 motif lies at 120–124 (HRYHH). A helical membrane pass occupies residues 180–200 (VLYHILTFGFLLYYFGGLSFL). Residues His-223, His-252, His-255, and His-256 each coordinate Fe cation. The short motif at 252-256 (HNNHH) is the Histidine box-3 element. A helical transmembrane segment spans residues 268-288 (WWQIDISWYIVRFLEIIGLAT).

It belongs to the fatty acid desaturase type 1 family. The cofactor is Fe cation. In terms of tissue distribution, strongly expressed in inflorescence meristems, leaves, and flowers, and weakly in roots and seedpods.

Its subcellular location is the endoplasmic reticulum membrane. The protein localises to the plastid. The protein resides in the chloroplast membrane. The protein operates within lipid metabolism; polyunsaturated fatty acid biosynthesis. Functionally, involved in delta-9 desaturation of fatty acids. Involved in the production of very-long-chain fatty acids (VLCFAs). May desaturate chloroplastic monogalactosyl diacylglycerol (MGDG) and alter chloroplast membrane fluidity, which is required to prime a cold acclimation response. This chain is Delta-9 acyl-lipid desaturase 1, found in Arabidopsis thaliana (Mouse-ear cress).